An 85-amino-acid polypeptide reads, in one-letter code: Exodeoxyribonuclease 7 small subunit (85 aa).

It belongs to the XseB family. In terms of assembly, heterooligomer composed of large and small subunits.

It is found in the cytoplasm. The enzyme catalyses Exonucleolytic cleavage in either 5'- to 3'- or 3'- to 5'-direction to yield nucleoside 5'-phosphates.. In terms of biological role, bidirectionally degrades single-stranded DNA into large acid-insoluble oligonucleotides, which are then degraded further into small acid-soluble oligonucleotides. This Alkalilimnicola ehrlichii (strain ATCC BAA-1101 / DSM 17681 / MLHE-1) protein is Exodeoxyribonuclease 7 small subunit.